The sequence spans 808 residues: Phenylalanine--tRNA ligase beta subunit (808 aa).

Positions 40 to 157 (NKGATNVVVG…QSVEPGQDAL (118 aa)) constitute a tRNA-binding domain. The region spanning 411-486 (RSERVIALDL…RLYGYDELPS (76 aa)) is the B5 domain. Mg(2+) contacts are provided by aspartate 464, aspartate 470, glutamate 473, and glutamate 474. Positions 714–807 (PRYPAITRDM…VQKQTGAVLR (94 aa)) constitute an FDX-ACB domain.

This sequence belongs to the phenylalanyl-tRNA synthetase beta subunit family. Type 1 subfamily. As to quaternary structure, tetramer of two alpha and two beta subunits. Requires Mg(2+) as cofactor.

It localises to the cytoplasm. It carries out the reaction tRNA(Phe) + L-phenylalanine + ATP = L-phenylalanyl-tRNA(Phe) + AMP + diphosphate + H(+). This is Phenylalanine--tRNA ligase beta subunit from Shouchella clausii (strain KSM-K16) (Alkalihalobacillus clausii).